A 261-amino-acid polypeptide reads, in one-letter code: Cytochrome c oxidase subunit 3 (261 aa).

The Mitochondrial matrix segment spans residues Met1 to Pro15. The chain crosses the membrane as a helical span at residues Trp16–Trp34. Residues Phe35–Thr40 lie on the Mitochondrial intermembrane side of the membrane. Residues Leu41–Thr66 form a helical membrane-spanning segment. The Mitochondrial matrix portion of the chain corresponds to Phe67–Thr72. Residues Ser73 to Ser105 traverse the membrane as a helical segment. The Mitochondrial intermembrane portion of the chain corresponds to Leu106–Glu128. The helical transmembrane segment at Val129 to Met152 threads the bilayer. Topologically, residues Glu153–Asn155 are mitochondrial matrix. The chain crosses the membrane as a helical span at residues Arg156–Glu183. The Mitochondrial intermembrane portion of the chain corresponds to Ala184–Asp190. A helical transmembrane segment spans residues Gly191–Leu223. Over Lys224–His232 the chain is Mitochondrial matrix. Residues Phe233–Ile256 form a helical membrane-spanning segment. Residues Tyr257 to Ser261 are Mitochondrial intermembrane-facing.

It belongs to the cytochrome c oxidase subunit 3 family. In terms of assembly, component of the cytochrome c oxidase (complex IV, CIV), a multisubunit enzyme composed of 14 subunits. The complex is composed of a catalytic core of 3 subunits MT-CO1, MT-CO2 and MT-CO3, encoded in the mitochondrial DNA, and 11 supernumerary subunits COX4I, COX5A, COX5B, COX6A, COX6B, COX6C, COX7A, COX7B, COX7C, COX8 and NDUFA4, which are encoded in the nuclear genome. The complex exists as a monomer or a dimer and forms supercomplexes (SCs) in the inner mitochondrial membrane with NADH-ubiquinone oxidoreductase (complex I, CI) and ubiquinol-cytochrome c oxidoreductase (cytochrome b-c1 complex, complex III, CIII), resulting in different assemblies (supercomplex SCI(1)III(2)IV(1) and megacomplex MCI(2)III(2)IV(2)).

It localises to the mitochondrion inner membrane. It carries out the reaction 4 Fe(II)-[cytochrome c] + O2 + 8 H(+)(in) = 4 Fe(III)-[cytochrome c] + 2 H2O + 4 H(+)(out). Its function is as follows. Component of the cytochrome c oxidase, the last enzyme in the mitochondrial electron transport chain which drives oxidative phosphorylation. The respiratory chain contains 3 multisubunit complexes succinate dehydrogenase (complex II, CII), ubiquinol-cytochrome c oxidoreductase (cytochrome b-c1 complex, complex III, CIII) and cytochrome c oxidase (complex IV, CIV), that cooperate to transfer electrons derived from NADH and succinate to molecular oxygen, creating an electrochemical gradient over the inner membrane that drives transmembrane transport and the ATP synthase. Cytochrome c oxidase is the component of the respiratory chain that catalyzes the reduction of oxygen to water. Electrons originating from reduced cytochrome c in the intermembrane space (IMS) are transferred via the dinuclear copper A center (CU(A)) of subunit 2 and heme A of subunit 1 to the active site in subunit 1, a binuclear center (BNC) formed by heme A3 and copper B (CU(B)). The BNC reduces molecular oxygen to 2 water molecules using 4 electrons from cytochrome c in the IMS and 4 protons from the mitochondrial matrix. The chain is Cytochrome c oxidase subunit 3 (MT-CO3) from Equus caballus (Horse).